Here is a 122-residue protein sequence, read N- to C-terminus: Large ribosomal subunit protein uL14 (122 aa).

It belongs to the universal ribosomal protein uL14 family. In terms of assembly, part of the 50S ribosomal subunit. Forms a cluster with proteins L3 and L19. In the 70S ribosome, L14 and L19 interact and together make contacts with the 16S rRNA in bridges B5 and B8.

Its function is as follows. Binds to 23S rRNA. Forms part of two intersubunit bridges in the 70S ribosome. The protein is Large ribosomal subunit protein uL14 of Mycolicibacterium smegmatis (strain ATCC 700084 / mc(2)155) (Mycobacterium smegmatis).